Here is a 374-residue protein sequence, read N- to C-terminus: tRNA (guanine(26)-N(2))-dimethyltransferase (374 aa).

Residues 1–367 (MILKEGEVVF…ATLKNVIEAI (367 aa)) form the Trm1 methyltransferase domain. S-adenosyl-L-methionine-binding residues include Arg34, Arg66, Asp86, Asp113, and Ala114.

It belongs to the class I-like SAM-binding methyltransferase superfamily. Trm1 family.

It carries out the reaction guanosine(26) in tRNA + 2 S-adenosyl-L-methionine = N(2)-dimethylguanosine(26) in tRNA + 2 S-adenosyl-L-homocysteine + 2 H(+). Dimethylates a single guanine residue at position 26 of a number of tRNAs using S-adenosyl-L-methionine as donor of the methyl groups. This Methanocaldococcus jannaschii (strain ATCC 43067 / DSM 2661 / JAL-1 / JCM 10045 / NBRC 100440) (Methanococcus jannaschii) protein is tRNA (guanine(26)-N(2))-dimethyltransferase.